The sequence spans 835 residues: Lon protease (835 aa).

In terms of domain architecture, Lon N-terminal spans 4-224 (LPYIAIRNQL…LAINMLINAI (221 aa)). Residue 412–419 (GPPGTGKT) coordinates ATP. A Lon proteolytic domain is found at 649–832 (QPKAGVVNAL…DEIFKYIFEA (184 aa)). Residues Ser738 and Lys781 contribute to the active site.

It belongs to the peptidase S16 family. As to quaternary structure, homohexamer. Organized in a ring with a central cavity.

It is found in the cytoplasm. It carries out the reaction Hydrolysis of proteins in presence of ATP.. Functionally, ATP-dependent serine protease that mediates the selective degradation of mutant and abnormal proteins as well as certain short-lived regulatory proteins. Required for cellular homeostasis and for survival from DNA damage and developmental changes induced by stress. Degrades polypeptides processively to yield small peptide fragments that are 5 to 10 amino acids long. Binds to DNA in a double-stranded, site-specific manner. The protein is Lon protease of Metamycoplasma arthritidis (strain 158L3-1) (Mycoplasma arthritidis).